Consider the following 167-residue polypeptide: NADH-quinone oxidoreductase subunit B 1 (167 aa).

The [4Fe-4S] cluster site is built by Cys-38, Cys-39, Cys-104, and Cys-133.

The protein belongs to the complex I 20 kDa subunit family. NDH-1 is composed of 14 different subunits. Subunits NuoB, C, D, E, F, and G constitute the peripheral sector of the complex. Requires [4Fe-4S] cluster as cofactor.

Its subcellular location is the cell membrane. The enzyme catalyses a quinone + NADH + 5 H(+)(in) = a quinol + NAD(+) + 4 H(+)(out). In terms of biological role, NDH-1 shuttles electrons from NADH, via FMN and iron-sulfur (Fe-S) centers, to quinones in the respiratory chain. The immediate electron acceptor for the enzyme in this species is believed to be ubiquinone. Couples the redox reaction to proton translocation (for every two electrons transferred, four hydrogen ions are translocated across the cytoplasmic membrane), and thus conserves the redox energy in a proton gradient. In Roseiflexus castenholzii (strain DSM 13941 / HLO8), this protein is NADH-quinone oxidoreductase subunit B 1.